A 244-amino-acid chain; its full sequence is MAALTIFPAIDLKAGQVVRLAEGDMDRATVYGDDPAAQARRFADAGATHLHVVDLDGAFAGASVNGAAVESIIAAFPGQVQVGGGIRDRAGVDRWLALGVARVIIGTAALKDPEFVKSAARDLPGRIVVGVDARDGMVATEGWADVSDVRVEDLARRFEDAGVAALLFTDVGRDGLLKGCNVAATVALAGVVDIPVIASGGVAGIEDIHALRPHVADGIEGVITGRALYDGRLDLAEAIAAGAA.

Residue aspartate 11 is the Proton acceptor of the active site. Catalysis depends on aspartate 132, which acts as the Proton donor.

Belongs to the HisA/HisF family.

The protein localises to the cytoplasm. It carries out the reaction 1-(5-phospho-beta-D-ribosyl)-5-[(5-phospho-beta-D-ribosylamino)methylideneamino]imidazole-4-carboxamide = 5-[(5-phospho-1-deoxy-D-ribulos-1-ylimino)methylamino]-1-(5-phospho-beta-D-ribosyl)imidazole-4-carboxamide. It functions in the pathway amino-acid biosynthesis; L-histidine biosynthesis; L-histidine from 5-phospho-alpha-D-ribose 1-diphosphate: step 4/9. In Sphingopyxis alaskensis (strain DSM 13593 / LMG 18877 / RB2256) (Sphingomonas alaskensis), this protein is 1-(5-phosphoribosyl)-5-[(5-phosphoribosylamino)methylideneamino] imidazole-4-carboxamide isomerase.